The primary structure comprises 212 residues: Ribosomal RNA small subunit methyltransferase G (212 aa).

S-adenosyl-L-methionine contacts are provided by residues Gly72, Leu77, 123–124, and Arg138; that span reads VE.

Belongs to the methyltransferase superfamily. RNA methyltransferase RsmG family.

It localises to the cytoplasm. The catalysed reaction is guanosine(527) in 16S rRNA + S-adenosyl-L-methionine = N(7)-methylguanosine(527) in 16S rRNA + S-adenosyl-L-homocysteine. Functionally, specifically methylates the N7 position of guanine in position 527 of 16S rRNA. The sequence is that of Ribosomal RNA small subunit methyltransferase G from Histophilus somni (strain 129Pt) (Haemophilus somnus).